The sequence spans 950 residues: Oxysterol-binding protein-related protein 1 (950 aa).

The tract at residues 1-237 is interaction with RAB7A; it reads MNTEAEQQLL…NKVVHKALKR (237 aa). ANK repeat units lie at residues 47-76, 80-109, and 175-204; these read LGWT…KVNM, MGDT…DSTV, and LGNT…DPSL. Positions 235–334 constitute a PH domain; it reads LKRYEGPLWK…WLEAIEEHSA (100 aa). Residues 430 to 463 are a coiled coil; that stretch reads NFKLEQEQEKNKILSEALETLATEHHELERSLVE. The FFAT signature appears at 469-483; that stretch reads SILSEEEFYDALSGS. At Ser499 the chain carries Phosphoserine. Disordered stretches follow at residues 502-530 and 795-821; these read ENEV…SNGI and KKNT…VPDS. The stretch at 879–913 forms a coiled coil; that stretch reads RAMENGEIDLASEEKKRLEEKQRAARKNRSKSEED.

Belongs to the OSBP family. As to quaternary structure, interacts (via FFAT motif) with VAPA and VAPB. Interacts with the GTP-bound form of RAB7A. Interacts with OAS1B. Interacts (via FFAT motif) with MOSPD2 (via MSP domain). As to expression, ubiquitous.

The protein resides in the late endosome. Functionally, binds phospholipids; exhibits strong binding to phosphatidic acid and weak binding to phosphatidylinositol 3-phosphate. Stabilizes GTP-bound RAB7A on late endosomes/lysosomes and alters functional properties of late endocytic compartments via its interaction with RAB7A. Binds 25-hydroxycholesterol and cholesterol. The chain is Oxysterol-binding protein-related protein 1 from Mus musculus (Mouse).